The sequence spans 163 residues: 6,7-dimethyl-8-ribityllumazine synthase (163 aa).

Residues F27, 58-60 (ALE), and 87-89 (CVV) contribute to the 5-amino-6-(D-ribitylamino)uracil site. 92–93 (DT) is a (2S)-2-hydroxy-3-oxobutyl phosphate binding site. H95 serves as the catalytic Proton donor. Residue N120 participates in 5-amino-6-(D-ribitylamino)uracil binding. R134 provides a ligand contact to (2S)-2-hydroxy-3-oxobutyl phosphate.

Belongs to the DMRL synthase family.

It catalyses the reaction (2S)-2-hydroxy-3-oxobutyl phosphate + 5-amino-6-(D-ribitylamino)uracil = 6,7-dimethyl-8-(1-D-ribityl)lumazine + phosphate + 2 H2O + H(+). Its pathway is cofactor biosynthesis; riboflavin biosynthesis; riboflavin from 2-hydroxy-3-oxobutyl phosphate and 5-amino-6-(D-ribitylamino)uracil: step 1/2. Functionally, catalyzes the formation of 6,7-dimethyl-8-ribityllumazine by condensation of 5-amino-6-(D-ribitylamino)uracil with 3,4-dihydroxy-2-butanone 4-phosphate. This is the penultimate step in the biosynthesis of riboflavin. The chain is 6,7-dimethyl-8-ribityllumazine synthase from Rhodopseudomonas palustris (strain BisA53).